The chain runs to 305 residues: uncharacterized protein (305 aa).

The segment at 255-305 (RCHRAGLRSPPRTREPLWSLGPSGGEAAGEAPGGKGPPTPVLPHARRAGAA) is disordered. Gly residues predominate over residues 276–288 (PSGGEAAGEAPGG).

This is an uncharacterized protein from Streptomyces fradiae (Streptomyces roseoflavus).